We begin with the raw amino-acid sequence, 686 residues long: Protein arginine N-methyltransferase 7 (686 aa).

SAM-dependent MTase PRMT-type domains follow at residues 5–352 (SDDY…FSWW) and 357–686 (DLSL…FKFD).

Belongs to the class I-like SAM-binding methyltransferase superfamily. Protein arginine N-methyltransferase family. PRMT7 subfamily.

Its function is as follows. Essential arginine methyltransferase that can both catalyze the formation of omega-N monomethylarginine (MMA) and symmetrical dimethylarginine (sDMA). Specifically mediates the symmetrical dimethylation of arginine residues in the small nuclear ribonucleoproteins SmD1 and SmD3. In Aedes aegypti (Yellowfever mosquito), this protein is Protein arginine N-methyltransferase 7 (Art7).